Reading from the N-terminus, the 84-residue chain is Cytochrome b559 subunit alpha (84 aa).

Residues 24-38 (IIHAVTLPAIFIAGF) form a helical membrane-spanning segment. His-26 contributes to the heme binding site.

It belongs to the PsbE/PsbF family. Heterodimer of an alpha subunit and a beta subunit. PSII is composed of 1 copy each of membrane proteins PsbA, PsbB, PsbC, PsbD, PsbE, PsbF, PsbH, PsbI, PsbJ, PsbK, PsbL, PsbM, PsbT, PsbX, PsbY, Psb30/Ycf12, peripheral proteins PsbO, CyanoQ (PsbQ), PsbU, PsbV and a large number of cofactors. It forms dimeric complexes. It depends on heme b as a cofactor.

Its subcellular location is the cellular thylakoid membrane. Its function is as follows. This b-type cytochrome is tightly associated with the reaction center of photosystem II (PSII). PSII is a light-driven water:plastoquinone oxidoreductase that uses light energy to abstract electrons from H(2)O, generating O(2) and a proton gradient subsequently used for ATP formation. It consists of a core antenna complex that captures photons, and an electron transfer chain that converts photonic excitation into a charge separation. This Prochlorococcus marinus (strain MIT 9301) protein is Cytochrome b559 subunit alpha.